The sequence spans 99 residues: Sm-like protein LSM7 (99 aa).

Positions Glu6–Thr86 constitute a Sm domain.

It belongs to the snRNP Sm proteins family. In terms of assembly, component of the heptameric LSM1-LSM7 complex that forms a seven-membered ring structure with a donut shape. The LSM subunits are arranged in the order LSM1, LSM2, LSM3, LSM6, LSM5, LSM7 and LSM4. Component of the heptameric LSM2-LSM8 complex that forms a seven-membered ring structure with a donut shape. The LSM subunits are arranged in the order LSM8, LSM2, LSM3, LSM6, LSM5, LSM7 and LSM4. LSM7 subunit interacts only with its two neighboring subunits, LSM5 and LSM4. Expressed in roots, leaves, stems, flowers and siliques.

It is found in the cytoplasm. The protein localises to the nucleus. Functionally, component of LSM protein complexes, which are involved in RNA processing. Component of the cytoplasmic LSM1-LSM7 complex which is involved in mRNA degradation by promoting decapping and leading to accurate 5'-3' mRNA decay. The cytoplasmic LSM1-LSM7 complex regulates developmental gene expression by the decapping of specific development-related transcripts. Component of the nuclear LSM2-LSM8 complex which is involved splicing nuclear mRNAs. LSM2-LSM8 binds directly to the U6 small nuclear RNAs (snRNAs) and is essential for accurate splicing of selected development-related mRNAs through the stabilization of the spliceosomal U6 snRNA. Plays a critical role in the regulation of development-related gene expression. The chain is Sm-like protein LSM7 from Arabidopsis thaliana (Mouse-ear cress).